The chain runs to 168 residues: MSKRKWRGFRGAQQERAQPPAASPQPCPAPHAGLPGGSRRRAPAPAGQQQMRAESRSGAQRRRGSARRGAHREAGGCVRGRTRSSGSERSNALWQAVDAAEALALSSPLRRPWDQAQHFTNPAPFSKGPQSAPPSPPAGRRRRGADLALTPLAGEGHTRWRQPGRPGK.

2 disordered regions span residues 1–91 (MSKR…ERSN) and 108–168 (PLRR…RPGK). Basic residues-rich tracts occupy residues 59–70 (AQRRRGSARRGA) and 159–168 (RWRQPGRPGK).

The chain is Putative insulin-like growth factor 2 antisense gene protein (IGF2-AS) from Homo sapiens (Human).